Reading from the N-terminus, the 211-residue chain is Uridine kinase (211 aa).

Position 12–19 (12–19 (GGTGSGKT)) interacts with ATP.

This sequence belongs to the uridine kinase family.

It localises to the cytoplasm. The catalysed reaction is uridine + ATP = UMP + ADP + H(+). It carries out the reaction cytidine + ATP = CMP + ADP + H(+). It participates in pyrimidine metabolism; CTP biosynthesis via salvage pathway; CTP from cytidine: step 1/3. It functions in the pathway pyrimidine metabolism; UMP biosynthesis via salvage pathway; UMP from uridine: step 1/1. The polypeptide is Uridine kinase (Halalkalibacterium halodurans (strain ATCC BAA-125 / DSM 18197 / FERM 7344 / JCM 9153 / C-125) (Bacillus halodurans)).